We begin with the raw amino-acid sequence, 404 residues long: Ubiquitin-like modifier-activating enzyme 5 (404 aa).

5 residues coordinate ATP: glycine 83, aspartate 104, lysine 127, asparagine 150, and asparagine 184. The Zn(2+) site is built by cysteine 226 and cysteine 229. The active-site Glycyl thioester intermediate is the cysteine 250. 2 residues coordinate Zn(2+): cysteine 303 and cysteine 308. The segment at 372-393 (APEKSSETSEETVTAATADETS) is disordered. Residues 382-391 (ETVTAATADE) show a composition bias toward low complexity.

Belongs to the ubiquitin-activating E1 family. UBA5 subfamily.

Functionally, E1-like enzyme which activates UFM1. The polypeptide is Ubiquitin-like modifier-activating enzyme 5 (Drosophila simulans (Fruit fly)).